Here is a 79-residue protein sequence, read N- to C-terminus: Small ribosomal subunit protein bS18 (79 aa).

Belongs to the bacterial ribosomal protein bS18 family. In terms of assembly, part of the 30S ribosomal subunit. Forms a tight heterodimer with protein bS6.

Functionally, binds as a heterodimer with protein bS6 to the central domain of the 16S rRNA, where it helps stabilize the platform of the 30S subunit. The polypeptide is Small ribosomal subunit protein bS18 (Ureaplasma parvum serovar 3 (strain ATCC 27815 / 27 / NCTC 11736)).